A 411-amino-acid chain; its full sequence is LL-diaminopimelate aminotransferase (411 aa).

Residues tyrosine 15 and glycine 42 each contribute to the substrate site. Residues tyrosine 72, 108-109 (SK), tyrosine 132, asparagine 187, tyrosine 218, and 246-248 (SFS) contribute to the pyridoxal 5'-phosphate site. The substrate site is built by lysine 109, tyrosine 132, and asparagine 187. Residue lysine 249 is modified to N6-(pyridoxal phosphate)lysine. Arginine 257 and asparagine 292 together coordinate pyridoxal 5'-phosphate. Positions 292 and 388 each coordinate substrate.

It belongs to the class-I pyridoxal-phosphate-dependent aminotransferase family. LL-diaminopimelate aminotransferase subfamily. Homodimer. Pyridoxal 5'-phosphate serves as cofactor.

The enzyme catalyses (2S,6S)-2,6-diaminopimelate + 2-oxoglutarate = (S)-2,3,4,5-tetrahydrodipicolinate + L-glutamate + H2O + H(+). Its pathway is amino-acid biosynthesis; L-lysine biosynthesis via DAP pathway; LL-2,6-diaminopimelate from (S)-tetrahydrodipicolinate (aminotransferase route): step 1/1. Functionally, involved in the synthesis of meso-diaminopimelate (m-DAP or DL-DAP), required for both lysine and peptidoglycan biosynthesis. Catalyzes the direct conversion of tetrahydrodipicolinate to LL-diaminopimelate. This Synechococcus elongatus (strain ATCC 33912 / PCC 7942 / FACHB-805) (Anacystis nidulans R2) protein is LL-diaminopimelate aminotransferase.